A 192-amino-acid chain; its full sequence is dTTP/UTP pyrophosphatase (192 aa).

The Proton acceptor role is filled by D75.

The protein belongs to the Maf family. YhdE subfamily. The cofactor is a divalent metal cation.

The protein resides in the cytoplasm. It carries out the reaction dTTP + H2O = dTMP + diphosphate + H(+). The enzyme catalyses UTP + H2O = UMP + diphosphate + H(+). Functionally, nucleoside triphosphate pyrophosphatase that hydrolyzes dTTP and UTP. May have a dual role in cell division arrest and in preventing the incorporation of modified nucleotides into cellular nucleic acids. This chain is dTTP/UTP pyrophosphatase, found in Bdellovibrio bacteriovorus (strain ATCC 15356 / DSM 50701 / NCIMB 9529 / HD100).